Here is a 1397-residue protein sequence, read N- to C-terminus: DNA-directed RNA polymerase subunit beta' (1397 aa).

Zn(2+) contacts are provided by Cys-75, Cys-77, Cys-90, and Cys-93. The Mg(2+) site is built by Asp-465, Asp-467, and Asp-469. Zn(2+) is bound by residues Cys-819, Cys-893, Cys-900, and Cys-903.

The protein belongs to the RNA polymerase beta' chain family. The RNAP catalytic core consists of 2 alpha, 1 beta, 1 beta' and 1 omega subunit. When a sigma factor is associated with the core the holoenzyme is formed, which can initiate transcription. The cofactor is Mg(2+). Zn(2+) serves as cofactor.

It catalyses the reaction RNA(n) + a ribonucleoside 5'-triphosphate = RNA(n+1) + diphosphate. Functionally, DNA-dependent RNA polymerase catalyzes the transcription of DNA into RNA using the four ribonucleoside triphosphates as substrates. The chain is DNA-directed RNA polymerase subunit beta' from Acinetobacter baumannii (strain ACICU).